The following is a 354-amino-acid chain: Sulfate/thiosulfate import ATP-binding protein CysA (354 aa).

The ABC transporter domain occupies 3 to 237; sequence IEVRGLSKRF…PATPFVYGFL (235 aa). 35–42 provides a ligand contact to ATP; the sequence is GPSGCGKT.

The protein belongs to the ABC transporter superfamily. Sulfate/tungstate importer (TC 3.A.1.6) family. As to quaternary structure, the complex is composed of two ATP-binding proteins (CysA), two transmembrane proteins (CysT and CysW) and a solute-binding protein (CysP).

It localises to the cell inner membrane. The catalysed reaction is sulfate(out) + ATP + H2O = sulfate(in) + ADP + phosphate + H(+). It catalyses the reaction thiosulfate(out) + ATP + H2O = thiosulfate(in) + ADP + phosphate + H(+). Part of the ABC transporter complex CysAWTP involved in sulfate/thiosulfate import. Responsible for energy coupling to the transport system. The polypeptide is Sulfate/thiosulfate import ATP-binding protein CysA (Bordetella pertussis (strain Tohama I / ATCC BAA-589 / NCTC 13251)).